A 710-amino-acid chain; its full sequence is Prolyl endopeptidase (710 aa).

Met-1 is subject to N-acetylmethionine. Lys-157 carries the post-translational modification N6-acetyllysine. Catalysis depends on charge relay system residues Ser-554, Asp-641, and His-680.

This sequence belongs to the peptidase S9A family. In terms of tissue distribution, expressed in all tissues tested: uterus, kidney, heart, lung, small intestine, smooth muscle, liver, spleen, thymus, adrenal, pituitary and whole brain.

The protein resides in the cytoplasm. The catalysed reaction is Hydrolysis of Pro-|-Xaa &gt;&gt; Ala-|-Xaa in oligopeptides.. With respect to regulation, inhibited by DFP, Z-Pro-prolinal and poststatin, but not by PMSF, SBTI, EDTA, leupeptin, E-64 and pepstatin. In terms of biological role, cleaves peptide bonds on the C-terminal side of prolyl residues within peptides that are up to approximately 30 amino acids long. Has high activity on the succinyl- (suc-) peptide-4-methylcoumaryl-7-amide (MCA) substrates suc-Gly-Pro-Leu-Gly-Pro-MCA, suc-Gly-Pro-MCA and suc-Ala-Ala-Ala-MCA. The protein is Prolyl endopeptidase of Rattus norvegicus (Rat).